A 117-amino-acid chain; its full sequence is Large ribosomal subunit protein bL20 (117 aa).

This sequence belongs to the bacterial ribosomal protein bL20 family.

Its function is as follows. Binds directly to 23S ribosomal RNA and is necessary for the in vitro assembly process of the 50S ribosomal subunit. It is not involved in the protein synthesizing functions of that subunit. The polypeptide is Large ribosomal subunit protein bL20 (Rickettsia africae (strain ESF-5)).